The following is a 107-amino-acid chain: Anti-adapter protein IraM (107 aa).

The protein belongs to the IraM/RssC family.

Its subcellular location is the cytoplasm. In terms of biological role, inhibits RpoS proteolysis by regulating RssB activity, thereby increasing the stability of the sigma stress factor RpoS during magnesium starvation. In Escherichia coli (strain K12 / MC4100 / BW2952), this protein is Anti-adapter protein IraM.